A 508-amino-acid polypeptide reads, in one-letter code: MGLPWYRVHTVVLNDPGRLLAVHIMHTALVAGWAGSMALYELAVFDPSDPVLDPMWRQGMFVIPFMTRLGITNSWGGWSITGGTVTNPGIWSYEGVAGSHILFSGLCFLAAIWHWVYWDLAIFSDERTGKPSLDLPKIFGIHLFLSGLACFGFGAFHVTGLYGPGIWVSDPYGLTGEVQPVNPAWGVEGFDPFVPGGIASHHIAAGTLGILAGLFHLSVRPPQRLYKGLRMGNIETVLSSSIAAVFFAAFVVAGTMWYGSATTPIELFGPTRYQWDQGYFQQEIYRRVGAGLAKNQSLSEAWSKIPEKLAFYDYIGNNPAKGGLFRAGSMDSGDGIAVGWLGHPIFRDKEGRELFVRRMPTFFETFPVVLVDGDGIVRADVPFRRAESKYSVEQVGVTVEFYGGELNGVSYSDPATVKKYARRAQLGEIFELDRATLKSDGVFRSSPRGWFTFGHASFALLFFFGHIWHGARTLFRDVFAGIDPDLDTQVEFGAFQKLGDPTTRRQAV.

The next 6 helical transmembrane spans lie at 21–36, 101–115, 140–156, 203–218, 237–252, and 457–472; these read AVHI…WAGS, ILFS…IWHW, GIHL…FGAF, IAAG…FHLS, VLSS…AFVV, and SFAL…HGAR.

Belongs to the PsbB/PsbC family. PsbB subfamily. In terms of assembly, PSII is composed of 1 copy each of membrane proteins PsbA, PsbB, PsbC, PsbD, PsbE, PsbF, PsbH, PsbI, PsbJ, PsbK, PsbL, PsbM, PsbT, PsbX, PsbY, PsbZ, Psb30/Ycf12, at least 3 peripheral proteins of the oxygen-evolving complex and a large number of cofactors. It forms dimeric complexes. The cofactor is Binds multiple chlorophylls. PSII binds additional chlorophylls, carotenoids and specific lipids..

The protein resides in the plastid. Its subcellular location is the chloroplast thylakoid membrane. In terms of biological role, one of the components of the core complex of photosystem II (PSII). It binds chlorophyll and helps catalyze the primary light-induced photochemical processes of PSII. PSII is a light-driven water:plastoquinone oxidoreductase, using light energy to abstract electrons from H(2)O, generating O(2) and a proton gradient subsequently used for ATP formation. The sequence is that of Photosystem II CP47 reaction center protein from Oenothera argillicola (Appalachian evening primrose).